We begin with the raw amino-acid sequence, 65 residues long: U2-theraphotoxin-Pc1a (65 aa).

An N-terminal signal peptide occupies residues 1 to 20 (MGFKLVLFIAVLTLVGSSNA). Residues 21 to 36 (EISAKMDSRDSPMIQE) constitute a propeptide that is removed on maturation. 3 disulfide bridges follow: C39/C56, C46/C59, and C55/C64.

Belongs to the neurotoxin 36 family. 02 subfamily. Expressed by the venom gland.

It is found in the secreted. In terms of biological role, possesses strong antiplasmodial activity against the intra-erythrocyte stage of P.falciparum in vitro. IC(50) for inhibiting P.falciparum growth is 1.15 uM. Specifically interacts with infected erythrocytes. Does not lyse erythrocytes, is not cytotoxic to nucleated mammalian cells, and does not inhibit neuromuscular function. Has neither antibacterial nor antifungal activity. The protein is U2-theraphotoxin-Pc1a of Psalmopoeus cambridgei (Trinidad chevron tarantula).